The primary structure comprises 288 residues: Pyruvate synthase subunit PorB (288 aa).

Residues cysteine 16, cysteine 19, and cysteine 44 each contribute to the [4Fe-4S] cluster site. A compositionally biased stretch (polar residues) spans 137–148 (STPYGASTTTSP). Residues 137–159 (STPYGASTTTSPHGKESFGEDRP) are disordered. A compositionally biased stretch (basic and acidic residues) spans 149–159 (HGKESFGEDRP). [4Fe-4S] cluster is bound at residue cysteine 208.

In terms of assembly, heterotetramer of one alpha, one beta, one delta and one gamma chain. [4Fe-4S] cluster serves as cofactor.

The enzyme catalyses 2 oxidized [2Fe-2S]-[ferredoxin] + pyruvate + CoA = 2 reduced [2Fe-2S]-[ferredoxin] + acetyl-CoA + CO2 + H(+). The protein is Pyruvate synthase subunit PorB (porB) of Methanothermobacter thermautotrophicus (strain ATCC 29096 / DSM 1053 / JCM 10044 / NBRC 100330 / Delta H) (Methanobacterium thermoautotrophicum).